Reading from the N-terminus, the 136-residue chain is MIYMDTSALTKLLISEPETTELRTWLTAQSGQGEDAATSTLGRVELMRVVARYGQPGQTERARYLLDGLDILPLTEPVIGLAETIGPATLRSLDAIHLAAAAQIKRELTAFVTYDHRLLSGCREVGFVTASPGAVR.

The PINc domain occupies 2–104; the sequence is IYMDTSALTK…AIHLAAAAQI (103 aa). Residues Asp5 and Asp94 each coordinate Mg(2+).

It belongs to the PINc/VapC protein family. Mg(2+) serves as cofactor.

Functionally, toxic component of a type II toxin-antitoxin (TA) system. An RNase. Its toxic effect on colony formation is neutralized by coexpression with cognate antitoxin VapB47. In Mycobacterium tuberculosis (strain CDC 1551 / Oshkosh), this protein is Ribonuclease VapC47.